The primary structure comprises 85 residues: SKP1-like protein 6 (85 aa).

Residues 65 to 85 (MMAANYLNIQSLLDLTFSNCR) form an interaction with the F-box domain of F-box proteins region.

The protein belongs to the SKP1 family. Part of a SCF (SKP1-cullin-F-box) protein ligase complex.

It is found in the nucleus. It participates in protein modification; protein ubiquitination. In terms of biological role, involved in ubiquitination and subsequent proteasomal degradation of target proteins. Together with CUL1, RBX1 and a F-box protein, it forms a SCF E3 ubiquitin ligase complex. The functional specificity of this complex depends on the type of F-box protein. In the SCF complex, it serves as an adapter that links the F-box protein to CUL1. The protein is SKP1-like protein 6 (ASK6) of Arabidopsis thaliana (Mouse-ear cress).